The following is a 530-amino-acid chain: Bifunctional NAD(P)H-hydrate repair enzyme Nnr (530 aa).

Positions 1–224 (MYLVTAAEMG…GIPQKLVATQ (224 aa)) are NAD(P)H-hydrate epimerase. The YjeF N-terminal domain occupies 9–222 (MGQLDRLASS…DIGIPQKLVA (214 aa)). The NADPHX 1; for epimerase activity stretch occupies residues 60–64 (NNGGD). Asparagine 61 and aspartate 132 together coordinate K(+). The tract at residues 136–142 (GTGFKGA) is NADPHX 1; for epimerase activity. Aspartate 165 lines the (6S)-NADPHX pocket. A K(+)-binding site is contributed by serine 168. The YjeF C-terminal domain maps to 232–515 (TAAWCRSQLP…DFLPYVLRNL (284 aa)). The tract at residues 232 to 530 (TAAWCRSQLP…TIVAAGLGRD (299 aa)) is ADP-dependent (S)-NAD(P)H-hydrate dehydratase. Glycine 338 lines the (6S)-NADPHX pocket. The tract at residues 389 to 395 (HPGEMAR) is NADPHX 2; for dehydratase activity. ADP is bound by residues 426–430 (KGART) and 446–455 (NPGMATAGSG). Aspartate 456 is a binding site for (6S)-NADPHX.

In the N-terminal section; belongs to the NnrE/AIBP family. It in the C-terminal section; belongs to the NnrD/CARKD family. K(+) serves as cofactor.

It carries out the reaction (6S)-NADHX + ADP = AMP + phosphate + NADH + H(+). The enzyme catalyses (6S)-NADPHX + ADP = AMP + phosphate + NADPH + H(+). It catalyses the reaction (6R)-NADHX = (6S)-NADHX. The catalysed reaction is (6R)-NADPHX = (6S)-NADPHX. Functionally, bifunctional enzyme that catalyzes the epimerization of the S- and R-forms of NAD(P)HX and the dehydration of the S-form of NAD(P)HX at the expense of ADP, which is converted to AMP. This allows the repair of both epimers of NAD(P)HX, a damaged form of NAD(P)H that is a result of enzymatic or heat-dependent hydration. The protein is Bifunctional NAD(P)H-hydrate repair enzyme Nnr (nnr) of Moorella thermoacetica (strain ATCC 39073 / JCM 9320).